We begin with the raw amino-acid sequence, 476 residues long: Cysteine--tRNA ligase (476 aa).

C27 contributes to the Zn(2+) binding site. The 'HIGH' region signature appears at 29–39 (ITPYDSVHVGH). Zn(2+) is bound by residues C213, H238, and E242. The 'KMSKS' region motif lies at 271–275 (KMSKS). An ATP-binding site is contributed by K274.

The protein belongs to the class-I aminoacyl-tRNA synthetase family. Zn(2+) serves as cofactor.

It is found in the cytoplasm. The enzyme catalyses tRNA(Cys) + L-cysteine + ATP = L-cysteinyl-tRNA(Cys) + AMP + diphosphate. The protein is Cysteine--tRNA ligase of Pyrobaculum arsenaticum (strain DSM 13514 / JCM 11321 / PZ6).